The primary structure comprises 372 residues: Nickel transporter NicT (372 aa).

Helical transmembrane passes span 30–50 (LMFA…TLLV), 55–75 (LSLG…TLGL), 104–124 (VGFF…VMLV), 152–172 (ISGA…VGIV), 218–238 (VGFL…LVLA), 245–265 (GLPW…MCLL), 294–314 (VTGL…LGLI), and 335–355 (TVGF…LLVW).

Belongs to the NiCoT transporter (TC 2.A.52) family.

Its subcellular location is the cell membrane. It carries out the reaction Ni(2+)(in) = Ni(2+)(out). Its activity is regulated as follows. Export of the fluoroquinolone antibiotic norfloxacin is inhibited by the proton ionophore carbonyl cyanide m-chlorophenylhydrazone (CCCP). Nickel may influence the extrusion of antibiotics possibly by facilitating the proton motive force-dependent efflux process. Its function is as follows. Involved in nickel uptake. In addition, acts as a drug efflux pump and contributes to moderate tolerance towards different classes of antibiotics, including fluoroquinolones, aminoglycosides and the anti-TB drug isoniazid, with a preference for fluoroquinolones. The drug efflux function is probably dependent on proton motive force (pmf) or ion gradient, and might be facilitated by the presence of Ni(2+) ions. This is Nickel transporter NicT from Mycobacterium tuberculosis (strain ATCC 25618 / H37Rv).